Reading from the N-terminus, the 142-residue chain is Large ribosomal subunit protein uL13 (142 aa).

Belongs to the universal ribosomal protein uL13 family. Part of the 50S ribosomal subunit.

This protein is one of the early assembly proteins of the 50S ribosomal subunit, although it is not seen to bind rRNA by itself. It is important during the early stages of 50S assembly. The chain is Large ribosomal subunit protein uL13 from Lachnospira eligens (strain ATCC 27750 / DSM 3376 / VPI C15-48 / C15-B4) (Eubacterium eligens).